A 536-amino-acid chain; its full sequence is MRDIEEILHEMGLSKDDYELYGRYMAKLSLNLQEVNKKKAKLILVTAMTPTAAGEGKTTTTIGLGQAFKKLGKNVAIAIREPSLGPCFGIKGGATGGGKSKVEPSDRINLLFTGDFPAISAAHNLLSAMINNHIYHGNELNLDPKRITFPRTIDMNDRSLRSIVVGVGPRDMGAIANDNFVITPASEVMAITGLSLNYKDLKEKLSRILAGFTVKNKPVFAADLKAEGSMAALLRDALKPNLVQTTEGVPAFVHTGPFGNIAHGTSSIVADRIAMNLFDYVITEAGFGSDLGAEKFFNIVSRIGNLPINAVVLVATIRALKLHGGSKKQGEDVEAVKEGSKNLLRHVANIRKFGVEPVVALNKFPTDTENEIMAIGEILDSHGIKWALSEVFEKGGEGGIELANKVLSSIGDYQIKRTYEVREDLKTKIEKIAVNVYGADGVIFEKKALNDLKKAEEIMNDPYVCMAKTQYSFSDDASLLNDPHGFKVRVQSVNISSGAGFVVPILGEIMTMPGLPKRPAAENIDLAEDGEITGLF.

51–58 is an ATP binding site; that stretch reads TAAGEGKT.

This sequence belongs to the formate--tetrahydrofolate ligase family.

It catalyses the reaction (6S)-5,6,7,8-tetrahydrofolate + formate + ATP = (6R)-10-formyltetrahydrofolate + ADP + phosphate. Its pathway is one-carbon metabolism; tetrahydrofolate interconversion. The polypeptide is Formate--tetrahydrofolate ligase (Thermoplasma volcanium (strain ATCC 51530 / DSM 4299 / JCM 9571 / NBRC 15438 / GSS1)).